Here is a 349-residue protein sequence, read N- to C-terminus: MPMSRPDSAVSLLPDYSLRAHNTFGFDARARVAARIGSPGQFASLARDPRVAGLDRLVLGGGSNVVFTRDFDGLVLLDEIRGRALVREDDGAWYVEAGGGENWHAFVEWTLAEGMPGLENLALIPGTVGAAPIQNIGAYGLEMKEHFASLRAVELATGELVEFDAARCAFGYRDSFFKRDGRGRFAIVAVTFRLPKAWTPRIGYADVARELAARGIDARAARARDVFDAVVAIRRAKLPDPLALGNAGSFFKNPVIDAQAFAALRAREPDIVSYPQPDGRVKLAAGWLIDRCGWKGRALGAAAVHERQALVLVNLGGASGADVLALAHAIRRDVLGRFGVELEMEPVCL.

The region spanning 26-197 (FDARARVAAR…VAVTFRLPKA (172 aa)) is the FAD-binding PCMH-type domain. Arg-173 is a catalytic residue. Ser-249 acts as the Proton donor in catalysis. Glu-345 is a catalytic residue.

Belongs to the MurB family. FAD is required as a cofactor.

It is found in the cytoplasm. It catalyses the reaction UDP-N-acetyl-alpha-D-muramate + NADP(+) = UDP-N-acetyl-3-O-(1-carboxyvinyl)-alpha-D-glucosamine + NADPH + H(+). It functions in the pathway cell wall biogenesis; peptidoglycan biosynthesis. Functionally, cell wall formation. This Burkholderia pseudomallei (strain K96243) protein is UDP-N-acetylenolpyruvoylglucosamine reductase.